Reading from the N-terminus, the 155-residue chain is MFKKNRWFWIVAVIGLILDQVTKYITVQSFEQIGDTFPIIPGVFHFTYVINTGAAFSAFRGGVGWLKWLSLLVSLGLMAFAYFGPHLNRWEQLAYGFILAGAFGNGIDRFLFGYVVDFLDFRLINFPVFNLADVFINIGIICLLISTFPHKSRVP.

4 consecutive transmembrane segments (helical) span residues 7 to 27 (WFWIVAVIGLILDQVTKYITV), 39 to 59 (IIPGVFHFTYVINTGAAFSAF), 63 to 83 (VGWLKWLSLLVSLGLMAFAYF), and 96 to 116 (GFILAGAFGNGIDRFLFGYVV). Residues Asp-117 and Asp-133 contribute to the active site. A helical transmembrane segment spans residues 126-146 (FPVFNLADVFINIGIICLLIS).

It belongs to the peptidase A8 family.

It localises to the cell inner membrane. It catalyses the reaction Release of signal peptides from bacterial membrane prolipoproteins. Hydrolyzes -Xaa-Yaa-Zaa-|-(S,diacylglyceryl)Cys-, in which Xaa is hydrophobic (preferably Leu), and Yaa (Ala or Ser) and Zaa (Gly or Ala) have small, neutral side chains.. Its pathway is protein modification; lipoprotein biosynthesis (signal peptide cleavage). Its function is as follows. This protein specifically catalyzes the removal of signal peptides from prolipoproteins. This chain is Lipoprotein signal peptidase, found in Microcystis aeruginosa (strain NIES-843 / IAM M-2473).